The following is an 879-amino-acid chain: Fanconi anemia core complex-associated protein 100 (879 aa).

Belongs to the multisubunit FA complex composed of FANCA, FANCB, FANCC, FANCE, FANCF, FANCG, FANCL/PHF9, FANCM, FAAP24 and FAAP100. Forms a subcomplex with FANCB and FANCL.

Its subcellular location is the nucleus. Functionally, plays a role in Fanconi anemia-associated DNA damage response network. Regulates FANCD2 monoubiquitination and the stability of the FA core complex. Induces chromosomal instability as well as hypersensitivity to DNA cross-linking agents, when repressed. The protein is Fanconi anemia core complex-associated protein 100 of Mus musculus (Mouse).